Reading from the N-terminus, the 939-residue chain is Isoleucine--tRNA ligase (939 aa).

The 'HIGH' region signature appears at 57–67 (PYANGEIHIGH). Glu563 lines the L-isoleucyl-5'-AMP pocket. The short motif at 604-608 (KMSKS) is the 'KMSKS' region element. Lys607 is a binding site for ATP. Zn(2+) is bound by residues Cys902, Cys905, Cys922, and Cys925.

It belongs to the class-I aminoacyl-tRNA synthetase family. IleS type 1 subfamily. Monomer. Zn(2+) is required as a cofactor.

It is found in the cytoplasm. It catalyses the reaction tRNA(Ile) + L-isoleucine + ATP = L-isoleucyl-tRNA(Ile) + AMP + diphosphate. In terms of biological role, catalyzes the attachment of isoleucine to tRNA(Ile). As IleRS can inadvertently accommodate and process structurally similar amino acids such as valine, to avoid such errors it has two additional distinct tRNA(Ile)-dependent editing activities. One activity is designated as 'pretransfer' editing and involves the hydrolysis of activated Val-AMP. The other activity is designated 'posttransfer' editing and involves deacylation of mischarged Val-tRNA(Ile). This is Isoleucine--tRNA ligase from Methylococcus capsulatus (strain ATCC 33009 / NCIMB 11132 / Bath).